The chain runs to 566 residues: Phenylalanine--tRNA ligase beta subunit (566 aa).

One can recognise a B5 domain in the interval 287–362 (YFQEEVEFDV…IGEGLASFYP (76 aa)). The Mg(2+) site is built by Asp340, Asp346, Glu349, and Asp350.

Belongs to the phenylalanyl-tRNA synthetase beta subunit family. Type 2 subfamily. As to quaternary structure, tetramer of two alpha and two beta subunits. The cofactor is Mg(2+).

It is found in the cytoplasm. It carries out the reaction tRNA(Phe) + L-phenylalanine + ATP = L-phenylalanyl-tRNA(Phe) + AMP + diphosphate + H(+). This is Phenylalanine--tRNA ligase beta subunit from Borrelia garinii subsp. bavariensis (strain ATCC BAA-2496 / DSM 23469 / PBi) (Borreliella bavariensis).